The sequence spans 361 residues: Glucose 1-dehydrogenase (361 aa).

Cysteine 41 contributes to the Zn(2+) binding site. A substrate-binding site is contributed by threonine 43. Residues histidine 68 and glutamate 69 each coordinate Zn(2+). Residues glutamate 119, glutamate 156, and asparagine 160 each coordinate substrate. Residue glutamate 156 participates in Zn(2+) binding. Residues 216-218 (NRH), 275-277 (FGT), 304-306 (SVD), and lysine 349 contribute to the NADP(+) site. Aspartate 306 lines the substrate pocket.

The protein belongs to the zinc-containing alcohol dehydrogenase family. Glucose 1-dehydrogenase subfamily. In terms of assembly, homotetramer. The cofactor is Zn(2+).

The catalysed reaction is D-glucose + NAD(+) = D-glucono-1,5-lactone + NADH + H(+). The enzyme catalyses D-glucose + NADP(+) = D-glucono-1,5-lactone + NADPH + H(+). It catalyses the reaction D-galactose + NAD(+) = D-galactono-1,4-lactone + NADH + H(+). It carries out the reaction D-galactose + NADP(+) = D-galactono-1,5-lactone + NADPH + H(+). Catalyzes the NAD(P)(+)-dependent oxidation of D-glucose to D-gluconate via gluconolactone. Is also significantly active with galactose as substrate, but not with mannose or glucose 6-phosphate. Can utilize both NAD(+) and NADP(+) as electron acceptor, with a marked preference for NADP(+). Physiologically, may be involved in the degradation of both glucose and galactose through a non-phosphorylative variant of the Entner-Doudoroff pathway. This Thermoplasma acidophilum (strain ATCC 25905 / DSM 1728 / JCM 9062 / NBRC 15155 / AMRC-C165) protein is Glucose 1-dehydrogenase.